Here is a 313-residue protein sequence, read N- to C-terminus: Short-chain dehydrogenase/reductase family 9C member 7 (313 aa).

NADP(+) is bound at residue phenylalanine 29–leucine 53. Serine 160 is a binding site for substrate. Residue tyrosine 172 is the Proton acceptor of the active site. Serine 185 is modified (phosphoserine).

This sequence belongs to the short-chain dehydrogenases/reductases (SDR) family.

The protein localises to the cytoplasm. It catalyses the reaction a N-[omega-(9R,10R)-epoxy-(13R)-hydroxy-(11E)-octadecenoyloxy]acyl-beta-D-glucosyl-(1&lt;-&gt;1)-sphing-4E-enine + NAD(+) = a N-[omega-(9R,10R)-epoxy-13-oxo-(11E)-octadecenoyloxy]acyl-beta-D-glucosyl-(1&lt;-&gt;1)-sphing-4E-enine + NADH + H(+). It carries out the reaction a N-[omega-(9R,10R)-epoxy-(13R)-hydroxy-(11E)-octadecenoyloxy]-acylsphing-4E-enine + NAD(+) = a N-[omega-(9R,10R)-epoxy-13-oxo-(11E)-octadecenoyloxy]-acylsphing-4E-enine + NADH + H(+). Plays a crucial role in the formation of the epidermal permeability barrier. Catalyzes the NAD+-dependent dehydrogenation of the linoleate 9,10-trans-epoxy-11E-13-alcohol esterified in omega-O-acylceramides (such as in N-[omega-(9R,10R)-epoxy-(13R)-hydroxy-(11E)-octadecenoyloxy]-acylsphing-4E-enine) to the corresponding 13-ketone, the reactive moiety required for binding of epidermal ceramides to proteins. Displays weak conversion of all-trans-retinal to all-trans-retinol in the presence of NADH. Has apparently no steroid dehydrogenase activity. This is Short-chain dehydrogenase/reductase family 9C member 7 (SDR9C7) from Bos taurus (Bovine).